Here is a 481-residue protein sequence, read N- to C-terminus: MTSKDKAVVSLPVSPWDAILKAAKDQLPSLDSDSSLSDCEEEEPFIFQRNQPVLIPDLTEELAEDPVGVDESGTWVTAGRSPSPEPLLVPGRLAIEPRSEWMVRSKDLAHQERRGPGWSCQSCVKSSPILLDTKEAPAWPEGRGSQSPPWSSQGEGATFPLEGKLKTEPSDTDFKNSAKRRALRRERRKMIEREILQKVTQAAQNPASGDQGQVAELGPRPKATSEQSWEGRPVLSLKQLEGWDLDYILQSLPGQQGSQGDSASRSAWWLADRCQDQGHSTGPSQDILLEQLALLCATQSRVRHPTWKVSADKLQDTEEQVARTRSASAESGFQTERVQKRAESRRLKTEPPTVFLDLRLTEPSDPQEHQSQESSEHSSSDSEEEEVGSAGSIPVASSWEQRYCTGKSQLLQQLRAFRKGAVPPQLSAKDGPGGQKDQAQEDTGGSQTQRKKHIKLWAEKQNALNLGDPLGTRLLPGMGQL.

Disordered regions lie at residues D70 to G91, L131 to P233, T306 to S397, and R415 to I454. S83, S145, and S147 each carry phosphoserine. Positions G144–E155 are enriched in polar residues. Positions G163 to N176 are enriched in basic and acidic residues. The segment covering S177–R188 has biased composition (basic residues). A compositionally biased stretch (polar residues) spans K198–Q211. Residues S310–A322 are compositionally biased toward basic and acidic residues. Residues R323–E336 are compositionally biased toward polar residues. Residue S328 is modified to Phosphoserine. Basic and acidic residues-rich tracts occupy residues R337 to T349 and R359 to S380.

The protein localises to the dynein axonemal particle. The protein resides in the cytoplasm. In terms of biological role, in cyliated cells, dynein axonemal particle-specific protein required for deployment of ODA to the axoneme. Interacts with outer dynein arm (ODA) subunits. This Rattus norvegicus (Rat) protein is Dynein axonemal assembly factor 8 (Dnaaf8).